A 178-amino-acid polypeptide reads, in one-letter code: Cell wall-binding protein YwsB (178 aa).

A signal peptide spans 1–30 (MNKPTKLFSTLALAAGMTAAAAGGAGTIHA). SH3b domains lie at 47-111 (IDSY…VKAA) and 116-178 (TKTK…HMTK).

The protein localises to the secreted. The protein resides in the cell wall. With respect to regulation, increases in stationary phase in a strain lacking the WprA protease. The protein is Cell wall-binding protein YwsB (ywsB) of Bacillus subtilis (strain 168).